Consider the following 153-residue polypeptide: UPF0311 protein Rpal_1987 (153 aa).

Belongs to the UPF0311 family.

The polypeptide is UPF0311 protein Rpal_1987 (Rhodopseudomonas palustris (strain TIE-1)).